Here is a 291-residue protein sequence, read N- to C-terminus: 4-diphosphocytidyl-2-C-methyl-D-erythritol kinase (291 aa).

The active site involves lysine 21. 104–114 serves as a coordination point for ATP; sequence PMGGGLGGGSS. Aspartate 146 is a catalytic residue.

This sequence belongs to the GHMP kinase family. IspE subfamily.

The enzyme catalyses 4-CDP-2-C-methyl-D-erythritol + ATP = 4-CDP-2-C-methyl-D-erythritol 2-phosphate + ADP + H(+). Its pathway is isoprenoid biosynthesis; isopentenyl diphosphate biosynthesis via DXP pathway; isopentenyl diphosphate from 1-deoxy-D-xylulose 5-phosphate: step 3/6. Its function is as follows. Catalyzes the phosphorylation of the position 2 hydroxy group of 4-diphosphocytidyl-2C-methyl-D-erythritol. The chain is 4-diphosphocytidyl-2-C-methyl-D-erythritol kinase from Methylococcus capsulatus (strain ATCC 33009 / NCIMB 11132 / Bath).